Reading from the N-terminus, the 354-residue chain is Cysteine and histidine-rich domain-containing protein morgana (354 aa).

Zn(2+) is bound by residues cysteine 4, cysteine 9, cysteine 23, histidine 26, cysteine 41, cysteine 42, cysteine 58, histidine 63, cysteine 140, cysteine 145, cysteine 159, histidine 162, cysteine 177, cysteine 178, cysteine 194, and histidine 199. 2 consecutive CHORD domains span residues 4-63 (CYNR…LAKH) and 140-199 (CKNN…YGEH). A CS domain is found at 210-301 (VVQCRYDWHQ…LEPGSWSNLN (92 aa)). A phosphoserine mark is found at serine 324 and serine 339.

In terms of assembly, interacts with Hsp83.

Its subcellular location is the cytoplasm. It is found in the nucleus. It localises to the cytoskeleton. The protein localises to the spindle. Its function is as follows. Regulates centrosome duplication and mitotic spindle dynamics. Also involved in controlling the size of dendritic arbors. May act as co-chaperone for Hsp83. During mitotic spindle assembly, regulates microtubule (MT) dynamics by binding to MTs and promoting MT polymerisation. Promotes the elongation and retraction of terminal branches in response to changes in body size, possibly acting downstream of the TORC2 pathway to enable proportional scaling of dendritic arbors. The protein is Cysteine and histidine-rich domain-containing protein morgana of Drosophila melanogaster (Fruit fly).